Here is a 145-residue protein sequence, read N- to C-terminus: Large-conductance mechanosensitive channel (145 aa).

Helical transmembrane passes span 14–34 (VMDL…VKSL), 38–58 (LIMP…YFLP), and 81–101 (GSFL…FLMV).

This sequence belongs to the MscL family. In terms of assembly, homopentamer.

It localises to the cell inner membrane. Channel that opens in response to stretch forces in the membrane lipid bilayer. May participate in the regulation of osmotic pressure changes within the cell. In Rhizobium johnstonii (strain DSM 114642 / LMG 32736 / 3841) (Rhizobium leguminosarum bv. viciae), this protein is Large-conductance mechanosensitive channel.